The primary structure comprises 64 residues: Large ribosomal subunit protein uL29 (64 aa).

This sequence belongs to the universal ribosomal protein uL29 family.

The polypeptide is Large ribosomal subunit protein uL29 (Maridesulfovibrio salexigens (strain ATCC 14822 / DSM 2638 / NCIMB 8403 / VKM B-1763) (Desulfovibrio salexigens)).